We begin with the raw amino-acid sequence, 667 residues long: Protein angel homolog 1 (667 aa).

2 positions are modified to phosphoserine: Ser77 and Ser105.

Belongs to the CCR4/nocturin family.

This is Protein angel homolog 1 from Rattus norvegicus (Rat).